The following is a 320-amino-acid chain: Lipoyl synthase (320 aa).

[4Fe-4S] cluster-binding residues include Cys67, Cys72, Cys78, Cys93, Cys97, Cys100, and Ser307. The Radical SAM core domain maps to 79-296 (FNHGTATFMI…RDKANEMGFE (218 aa)).

The protein belongs to the radical SAM superfamily. Lipoyl synthase family. It depends on [4Fe-4S] cluster as a cofactor.

Its subcellular location is the cytoplasm. The catalysed reaction is [[Fe-S] cluster scaffold protein carrying a second [4Fe-4S](2+) cluster] + N(6)-octanoyl-L-lysyl-[protein] + 2 oxidized [2Fe-2S]-[ferredoxin] + 2 S-adenosyl-L-methionine + 4 H(+) = [[Fe-S] cluster scaffold protein] + N(6)-[(R)-dihydrolipoyl]-L-lysyl-[protein] + 4 Fe(3+) + 2 hydrogen sulfide + 2 5'-deoxyadenosine + 2 L-methionine + 2 reduced [2Fe-2S]-[ferredoxin]. The protein operates within protein modification; protein lipoylation via endogenous pathway; protein N(6)-(lipoyl)lysine from octanoyl-[acyl-carrier-protein]: step 2/2. Its function is as follows. Catalyzes the radical-mediated insertion of two sulfur atoms into the C-6 and C-8 positions of the octanoyl moiety bound to the lipoyl domains of lipoate-dependent enzymes, thereby converting the octanoylated domains into lipoylated derivatives. This chain is Lipoyl synthase, found in Haemophilus influenzae (strain PittGG).